Reading from the N-terminus, the 129-residue chain is Transcription antitermination protein NusB (129 aa).

The protein belongs to the NusB family.

Functionally, involved in transcription antitermination. Required for transcription of ribosomal RNA (rRNA) genes. Binds specifically to the boxA antiterminator sequence of the ribosomal RNA (rrn) operons. The protein is Transcription antitermination protein NusB of Staphylococcus aureus (strain N315).